A 686-amino-acid polypeptide reads, in one-letter code: Probable metal-nicotianamine transporter YSL4 (686 aa).

The next 14 membrane-spanning stretches (helical) occupy residues 27–47 (WLVTPRAMAVAVLLGIVFCFV), 53–73 (MMTGFVPALNMPVTVLSFFLL), 96–116 (MFLITCVITCLNLAITGGFAT), 151–171 (FFLIGMAGVLSNIPLNQIMII), 203–223 (VMTIFKVFFGSFSWSIFQWFY), 264–284 (IVNFGLLFGAIISWGFLYPYL), 308–328 (VFISVTLIVTDGLINFLILVT), 373–393 (IPMFVPVAAYVAWTAISMVAM), 405–425 (VGVLYLAIPVVGFCNTYATGL), 441–461 (IFAAWIARPGAIVASLLVSGI), 488–508 (AMIAGQVFGVALSSVVSPCIF), 554–574 (CVELCVIAVLVTIAIDALVLV), 596–616 (FFAGSYFTLDMCLGGLLLLLW), and 629–649 (AAVAAGLICGEGLFTLPSALL).

This sequence belongs to the YSL (TC 2.A.67.2) family.

The protein localises to the membrane. Its function is as follows. May be involved in the transport of nicotianamine-chelated metals. The polypeptide is Probable metal-nicotianamine transporter YSL4 (YSL4) (Oryza sativa subsp. japonica (Rice)).